A 91-amino-acid polypeptide reads, in one-letter code: Conotoxin Im9.1 (91 aa).

A signal peptide spans 1–23; sequence MSKVGVVPLIFLVLLSIAALQNG. Positions 24-55 are excised as a propeptide; that stretch reads DDPRRQRDEKQSPQGDILRSTLTKYSYNIQRR. 3 disulfide bridges follow: Cys56-Cys72, Cys63-Cys83, and Cys66-Cys86.

Belongs to the conotoxin M superfamily. In terms of tissue distribution, expressed by the venom duct.

Its subcellular location is the secreted. In terms of biological role, probable neurotoxin. The protein is Conotoxin Im9.1 of Conus imperialis (Imperial cone).